Here is a 265-residue protein sequence, read N- to C-terminus: Phosphatidylserine decarboxylase proenzyme (265 aa).

Active-site charge relay system; for autoendoproteolytic cleavage activity residues include aspartate 86, histidine 142, and serine 226. Serine 226 serves as the catalytic Schiff-base intermediate with substrate; via pyruvic acid; for decarboxylase activity. Serine 226 bears the Pyruvic acid (Ser); by autocatalysis mark.

Belongs to the phosphatidylserine decarboxylase family. PSD-B subfamily. Prokaryotic type I sub-subfamily. In terms of assembly, heterodimer of a large membrane-associated beta subunit and a small pyruvoyl-containing alpha subunit. Pyruvate serves as cofactor. In terms of processing, is synthesized initially as an inactive proenzyme. Formation of the active enzyme involves a self-maturation process in which the active site pyruvoyl group is generated from an internal serine residue via an autocatalytic post-translational modification. Two non-identical subunits are generated from the proenzyme in this reaction, and the pyruvate is formed at the N-terminus of the alpha chain, which is derived from the carboxyl end of the proenzyme. The autoendoproteolytic cleavage occurs by a canonical serine protease mechanism, in which the side chain hydroxyl group of the serine supplies its oxygen atom to form the C-terminus of the beta chain, while the remainder of the serine residue undergoes an oxidative deamination to produce ammonia and the pyruvoyl prosthetic group on the alpha chain. During this reaction, the Ser that is part of the protease active site of the proenzyme becomes the pyruvoyl prosthetic group, which constitutes an essential element of the active site of the mature decarboxylase.

The protein resides in the cell membrane. The catalysed reaction is a 1,2-diacyl-sn-glycero-3-phospho-L-serine + H(+) = a 1,2-diacyl-sn-glycero-3-phosphoethanolamine + CO2. It participates in phospholipid metabolism; phosphatidylethanolamine biosynthesis; phosphatidylethanolamine from CDP-diacylglycerol: step 2/2. Its function is as follows. Catalyzes the formation of phosphatidylethanolamine (PtdEtn) from phosphatidylserine (PtdSer). This is Phosphatidylserine decarboxylase proenzyme from Anoxybacillus flavithermus (strain DSM 21510 / WK1).